Here is a 201-residue protein sequence, read N- to C-terminus: MGNLFGRKKQSRVTEQDKAILQLKQQRDKLRQYQKRIAQQLERERALARQLLRDGRKERAKLLLKKKRYQEQLLDRTENQISSLEAMVQSIEFTQIEMKVMEGLQFGNECLNKMHQVMSIEEVERILDETQEAVEYQRQIDELLAGSFTQEDEDAILEELSAITQEQIELPEVPSEPLPEKIPENVPVKARPRQAELVAAS.

The N-myristoyl glycine moiety is linked to residue G2. Residues 10-145 adopt a coiled-coil conformation; it reads QSRVTEQDKA…YQRQIDELLA (136 aa). S119 is modified (phosphoserine). The residue at position 130 (T130) is a Phosphothreonine. The Type-2 MIT-interacting motif motif lies at 168 to 179; that stretch reads IELPEVPSEPLP. An interaction with VPS4A region spans residues 170–181; sequence LPEVPSEPLPEK.

It belongs to the SNF7 family. In terms of assembly, probable core component of the endosomal sorting required for transport complex III (ESCRT-III). ESCRT-III components are thought to multimerize to form a flat lattice on the perimeter membrane of the endosome. Several assembly forms of ESCRT-III may exist that interact and act sequentially. Interacts with VPS4A; the interaction is direct. Interacts with VPS4B; the interaction is direct. Interacts with CHMP4A, CHMP4B and CHMP4C. Interacts with SNF8, VPS25 and VPS36. Post-translationally, ISGylated in a CHMP5-dependent manner. Isgylation weakens its interaction with VPS4A. Ubiquitously expressed.

It is found in the endomembrane system. The protein resides in the endosome membrane. Its subcellular location is the late endosome membrane. The protein localises to the membrane. In terms of biological role, probable core component of the endosomal sorting required for transport complex III (ESCRT-III) which is involved in multivesicular bodies (MVBs) formation and sorting of endosomal cargo proteins into MVBs. MVBs contain intraluminal vesicles (ILVs) that are generated by invagination and scission from the limiting membrane of the endosome and mostly are delivered to lysosomes enabling degradation of membrane proteins, such as stimulated growth factor receptors, lysosomal enzymes and lipids. The MVB pathway appears to require the sequential function of ESCRT-O, -I,-II and -III complexes. ESCRT-III proteins mostly dissociate from the invaginating membrane before the ILV is released. The ESCRT machinery also functions in topologically equivalent membrane fission events, such as the terminal stages of cytokinesis and the budding of enveloped viruses (HIV-1 and other lentiviruses). ESCRT-III proteins are believed to mediate the necessary vesicle extrusion and/or membrane fission activities, possibly in conjunction with the AAA ATPase VPS4. In the ESCRT-III complex, it probably serves as an acceptor for the ESCRT-II complex on endosomal membranes. This Homo sapiens (Human) protein is Charged multivesicular body protein 6 (CHMP6).